We begin with the raw amino-acid sequence, 385 residues long: Probable tRNA sulfurtransferase (385 aa).

Residues 57 to 160 (DGVIERVKKV…RGNAYVFTDK (104 aa)) form the THUMP domain. Residues 180–181 (ML), 205–206 (YY), Arg-262, Gly-284, and Gln-293 contribute to the ATP site.

This sequence belongs to the ThiI family.

Its subcellular location is the cytoplasm. It carries out the reaction [ThiI sulfur-carrier protein]-S-sulfanyl-L-cysteine + a uridine in tRNA + 2 reduced [2Fe-2S]-[ferredoxin] + ATP + H(+) = [ThiI sulfur-carrier protein]-L-cysteine + a 4-thiouridine in tRNA + 2 oxidized [2Fe-2S]-[ferredoxin] + AMP + diphosphate. It catalyses the reaction [ThiS sulfur-carrier protein]-C-terminal Gly-Gly-AMP + S-sulfanyl-L-cysteinyl-[cysteine desulfurase] + AH2 = [ThiS sulfur-carrier protein]-C-terminal-Gly-aminoethanethioate + L-cysteinyl-[cysteine desulfurase] + A + AMP + 2 H(+). It participates in cofactor biosynthesis; thiamine diphosphate biosynthesis. Its function is as follows. Catalyzes the ATP-dependent transfer of a sulfur to tRNA to produce 4-thiouridine in position 8 of tRNAs, which functions as a near-UV photosensor. Also catalyzes the transfer of sulfur to the sulfur carrier protein ThiS, forming ThiS-thiocarboxylate. This is a step in the synthesis of thiazole, in the thiamine biosynthesis pathway. The sulfur is donated as persulfide by IscS. The chain is Probable tRNA sulfurtransferase from Clostridium perfringens (strain ATCC 13124 / DSM 756 / JCM 1290 / NCIMB 6125 / NCTC 8237 / Type A).